A 136-amino-acid chain; its full sequence is Ubiquinol-cytochrome-c reductase complex assembly factor 2 (136 aa).

A mitochondrion-targeting transit peptide spans 1–13 (MAALRYRRFLKLC).

In terms of assembly, interacts with UQCC1.

It localises to the mitochondrion matrix. It is found in the mitochondrion nucleoid. The protein resides in the mitochondrion. The protein localises to the mitochondrion intermembrane space. Its subcellular location is the mitochondrion inner membrane. Required for the assembly of the ubiquinol-cytochrome c reductase complex (mitochondrial respiratory chain complex III or cytochrome b-c1 complex). Plays a role in the modulation of respiratory chain activities such as oxygen consumption and ATP production and via its modulation of the respiratory chain activity can regulate skeletal muscle differentiation and insulin secretion by pancreatic beta-cells. Involved in cytochrome b translation and/or stability. This Rattus norvegicus (Rat) protein is Ubiquinol-cytochrome-c reductase complex assembly factor 2 (Uqcc2).